The following is a 143-amino-acid chain: Endoribonuclease YbeY (143 aa).

His-109, His-113, and Asp-119 together coordinate Zn(2+).

It belongs to the endoribonuclease YbeY family. Requires Zn(2+) as cofactor.

It localises to the cytoplasm. Its function is as follows. Single strand-specific metallo-endoribonuclease involved in late-stage 70S ribosome quality control and in maturation of the 3' terminus of the 16S rRNA. The protein is Endoribonuclease YbeY of Christiangramia forsetii (strain DSM 17595 / CGMCC 1.15422 / KT0803) (Gramella forsetii).